Here is a 314-residue protein sequence, read N- to C-terminus: MPIRIDKKLPAVEILRTENIFVMDDQRAAHQDIRPLKILILNLMPQKMVTETQLLRHLANTPLQLDIDFLYMESHRSKTTRSEHMETFYKTFPEVKDEYFDGMIITGAPVEHLPFEEVDYWEEFTQVLEWSKTHVYSTLHICWGAQAGLYLRYGVEKYQMDSKLSGIYPQDTLKEGHLLFRGFDDSYVSPHSRHTEISKEEILNKTNLEILSEGPQVGVSILASRDLREIYSFGHLEYDRDTLAKEYFRDCDAGLAPHIPENYFKDDDVNQTPCLCWSSSAALFFSNWVNYAVYQETPFDWRKIEDDASAYGYL.

Cys-142 (acyl-thioester intermediate) is an active-site residue. 2 residues coordinate substrate: Lys-163 and Ser-192. The active-site Proton acceptor is His-235. Glu-237 is a catalytic residue. Position 249 (Arg-249) interacts with substrate.

The protein belongs to the MetA family.

The protein resides in the cytoplasm. It catalyses the reaction L-homoserine + acetyl-CoA = O-acetyl-L-homoserine + CoA. It participates in amino-acid biosynthesis; L-methionine biosynthesis via de novo pathway; O-acetyl-L-homoserine from L-homoserine: step 1/1. Its function is as follows. Transfers an acetyl group from acetyl-CoA to L-homoserine, forming acetyl-L-homoserine. This is Homoserine O-acetyltransferase from Streptococcus pneumoniae (strain Taiwan19F-14).